A 91-amino-acid chain; its full sequence is DNA-directed RNA polymerase subunit omega (91 aa).

It belongs to the RNA polymerase subunit omega family. In terms of assembly, the RNAP catalytic core consists of 2 alpha, 1 beta, 1 beta' and 1 omega subunit. When a sigma factor is associated with the core the holoenzyme is formed, which can initiate transcription.

It catalyses the reaction RNA(n) + a ribonucleoside 5'-triphosphate = RNA(n+1) + diphosphate. Functionally, promotes RNA polymerase assembly. Latches the N- and C-terminal regions of the beta' subunit thereby facilitating its interaction with the beta and alpha subunits. This chain is DNA-directed RNA polymerase subunit omega, found in Sodalis glossinidius (strain morsitans).